We begin with the raw amino-acid sequence, 444 residues long: MREIVLTQIGQCGNQIGAKFWEVISDEHAINSAGTYHGDSHLQLERINVYYNEASGGRYVPRAVLVDLEPGTMDSVRSGPFGQVFRPDNFIFGQCGAGNNWAKGHYTEGAELMESVMDVVRKEAESCDCLQGFQLTHSLGGGTGSGMGTLLLSKIREEYPDRIINTFSILPSPKVSDTVVEPYNATLSVHQLIENADETFCIDNEALYDICSKTLKLPTPTYGDLNHLVCATMSGVTTCLRFPGQLNADLRKLAVNMVPFPRLHFFMPGFAPLTSRGSQQYRALTVAELTQQMFDAKNMMAACDPRHGRYLTAAAIFRGRMPMREVDEQMFNIQDKNSSYFADWLPNNVKTAVCDIPPRGLKMSATFIGNNTAIQELFKRVSEQFTAMFRRKAFLHWYTGEGMDEMEFTEAESNMNDLVSEYQQYQDATAEEEEDEEYAEEEVA.

The short motif at 1 to 4 (MREI) is the MREI motif element. Q11, E69, S138, G142, T143, and G144 together coordinate GTP. E69 serves as a coordination point for Mg(2+). Residue S172 is modified to Phosphoserine; by CDK1. N204 and N226 together coordinate GTP. The tract at residues 423-444 (QQYQDATAEEEEDEEYAEEEVA) is disordered. Over residues 429 to 444 (TAEEEEDEEYAEEEVA) the composition is skewed to acidic residues. E436 bears the 5-glutamyl polyglutamate mark.

Belongs to the tubulin family. As to quaternary structure, dimer of alpha and beta chains. A typical microtubule is a hollow water-filled tube with an outer diameter of 25 nm and an inner diameter of 15 nM. Alpha-beta heterodimers associate head-to-tail to form protofilaments running lengthwise along the microtubule wall with the beta-tubulin subunit facing the microtubule plus end conferring a structural polarity. Microtubules usually have 13 protofilaments but different protofilament numbers can be found in some organisms and specialized cells. Mg(2+) is required as a cofactor. In terms of processing, some glutamate residues at the C-terminus are polyglycylated, resulting in polyglycine chains on the gamma-carboxyl group. Glycylation is mainly limited to tubulin incorporated into axonemes (cilia and flagella) whereas glutamylation is prevalent in neuronal cells, centrioles, axonemes, and the mitotic spindle. Both modifications can coexist on the same protein on adjacent residues, and lowering polyglycylation levels increases polyglutamylation, and reciprocally. Cilia and flagella glycylation is required for their stability and maintenance. Flagella glycylation controls sperm motility. Post-translationally, some glutamate residues at the C-terminus are polyglutamylated, resulting in polyglutamate chains on the gamma-carboxyl group. Polyglutamylation plays a key role in microtubule severing by spastin (SPAST). SPAST preferentially recognizes and acts on microtubules decorated with short polyglutamate tails: severing activity by SPAST increases as the number of glutamates per tubulin rises from one to eight, but decreases beyond this glutamylation threshold. Glutamylation is also involved in cilia motility. Phosphorylated on Ser-172 by CDK1 during the cell cycle, from metaphase to telophase, but not in interphase. This phosphorylation inhibits tubulin incorporation into microtubules.

It localises to the cytoplasm. Its subcellular location is the cytoskeleton. The protein resides in the spindle. Tubulin is the major constituent of microtubules, a cylinder consisting of laterally associated linear protofilaments composed of alpha- and beta-tubulin heterodimers. Microtubules grow by the addition of GTP-tubulin dimers to the microtubule end, where a stabilizing cap forms. Below the cap, tubulin dimers are in GDP-bound state, owing to GTPase activity of alpha-tubulin. Has a key role in meiotic spindle assembly and oocyte maturation. This is Tubulin beta-8 chain (TUBB8) from Pan troglodytes (Chimpanzee).